A 423-amino-acid polypeptide reads, in one-letter code: Protein CLP1 homolog (423 aa).

ATP is bound by residues Glu19, Lys60, and 122–127 (DVGKTT).

This sequence belongs to the Clp1 family. Clp1 subfamily.

Its subcellular location is the nucleus. Required for endonucleolytic cleavage during polyadenylation-dependent pre-mRNA 3'-end formation. The protein is Protein CLP1 homolog (cbc) of Culex quinquefasciatus (Southern house mosquito).